Here is a 419-residue protein sequence, read N- to C-terminus: Phosphoglycerate kinase (419 aa).

Residues D21–N23, R36, H60–D63, R137, and R174 contribute to the substrate site. Residues K225, G316, E347, and G376–S379 each bind ATP.

This sequence belongs to the phosphoglycerate kinase family. In terms of assembly, monomer.

It is found in the cytoplasm. The catalysed reaction is (2R)-3-phosphoglycerate + ATP = (2R)-3-phospho-glyceroyl phosphate + ADP. Its pathway is carbohydrate degradation; glycolysis; pyruvate from D-glyceraldehyde 3-phosphate: step 2/5. This is Phosphoglycerate kinase (pgk) from Treponema pallidum (strain Nichols).